The sequence spans 332 residues: Glycerol-3-phosphate dehydrogenase [NAD(P)+] (332 aa).

NADPH is bound by residues Trp-15, Arg-35, and Lys-108. 3 residues coordinate sn-glycerol 3-phosphate: Lys-108, Gly-137, and Ser-139. An NADPH-binding site is contributed by Ala-141. The sn-glycerol 3-phosphate site is built by Lys-192, Asp-245, Ser-255, Arg-256, and Asn-257. The active-site Proton acceptor is the Lys-192. Arg-256 is a binding site for NADPH. The NADPH site is built by Leu-278 and Glu-280.

Belongs to the NAD-dependent glycerol-3-phosphate dehydrogenase family.

The protein localises to the cytoplasm. The catalysed reaction is sn-glycerol 3-phosphate + NAD(+) = dihydroxyacetone phosphate + NADH + H(+). It catalyses the reaction sn-glycerol 3-phosphate + NADP(+) = dihydroxyacetone phosphate + NADPH + H(+). It participates in membrane lipid metabolism; glycerophospholipid metabolism. Catalyzes the reduction of the glycolytic intermediate dihydroxyacetone phosphate (DHAP) to sn-glycerol 3-phosphate (G3P), the key precursor for phospholipid synthesis. In Methylobacterium radiotolerans (strain ATCC 27329 / DSM 1819 / JCM 2831 / NBRC 15690 / NCIMB 10815 / 0-1), this protein is Glycerol-3-phosphate dehydrogenase [NAD(P)+].